A 423-amino-acid chain; its full sequence is Sporulation-regulated protein 28 (423 aa).

Positions 28–342 (KGLQLSILLL…ENYRAKVLTE (315 aa)) constitute a Septin-type G domain. Residues 38 to 45 (GEKGSGKS) are G1 motif. GTP-binding positions include 38-45 (GEKGSGKS), Gly-124, 204-212 (KADGLTETE), and Arg-291. Residues 121–124 (LFPG) are G3 motif. Residues 203 to 206 (PKAD) form a G4 motif region. Residues 360 to 381 (RGSVSNVSTRRNSASRTLGNPD) are compositionally biased toward polar residues. A disordered region spans residues 360-385 (RGSVSNVSTRRNSASRTLGNPDTNDE). Residues 384 to 417 (DENAYQIHKEIDEKNRIIEDYQRKIDLLEKMLAA) adopt a coiled-coil conformation.

The protein belongs to the TRAFAC class TrmE-Era-EngA-EngB-Septin-like GTPase superfamily. Septin GTPase family. As to quaternary structure, interacts with itself. Interacts with CDC11 and SPR3; probably to form a ring at the bud neck.

It is found in the membrane. It localises to the bud neck. Septins are GTPases involved in cytokinesis that assemble into filaments and form a ring at the cleavage site. May act by recruiting MYO1 and HOF1, a protein involved in septation, to the site of cleavage. Septins are also involved in cell morphogenesis, bud site selection, chitin deposition, cell cycle regulation, cell compartmentalization and spore wall formation. The sequence is that of Sporulation-regulated protein 28 (SPR28) from Saccharomyces cerevisiae (strain ATCC 204508 / S288c) (Baker's yeast).